An 880-amino-acid polypeptide reads, in one-letter code: Inner centromere protein (880 aa).

The segment at 52–104 (EPELMPKTPSQKNRRKKRRVSNIQDENRDPVRKRLSRRKSRSSQVGTRHLRSK) is disordered. Phosphoserine is present on residues S72, S142, and S147. Phosphothreonine is present on residues T149 and T189. Residues 175-229 (KGSLPPSPVSQGTLTSEEELTPKKSEAGKLDSVTVNSLKATPQSPKNRGVGEGRS) are disordered. S190 is subject to Phosphoserine. Residues 194-203 (LTPKKSEAGK) are compositionally biased toward basic and acidic residues. Residues T195 and T215 each carry the phosphothreonine modification. A compositionally biased stretch (polar residues) spans 207-220 (VTVNSLKATPQSPK). Phosphoserine occurs at positions 218, 239, 245, 248, 251, and 259. A Phosphothreonine modification is found at T270. 2 positions are modified to phosphoserine: S284 and S290. Disordered regions lie at residues 303 to 322 (KQEN…AGKE) and 350 to 461 (EQEP…PANK). The segment covering 352 to 366 (EPVEVAEPEEAEEEQ) has biased composition (acidic residues). A Phosphoserine modification is found at S376. At T382 the chain carries Phosphothreonine. The span at 385-402 (AISTPTSKPAAAGQTTTV) shows a compositional bias: polar residues. At S421 the chain carries Phosphoserine. Over residues 434 to 445 (EPDEEQLEDEEL) the composition is skewed to acidic residues. N450 carries N-linked (GlcNAc...) asparagine glycosylation. T452 is modified (phosphothreonine). Phosphoserine is present on residues S454 and S488. The tract at residues 506-733 (KCSFVEKERQ…EEKKRKEEQQ (228 aa)) is SAH. Positions 506–759 (KCSFVEKERQ…EVAAARKVLN (254 aa)) form a coiled coil. 4 disordered regions span residues 513–541 (ERQR…KRRR), 563–617 (VEQM…KQEE), 629–713 (EEER…KALR), and 775–813 (TPQG…IPSW). 3 stretches are compositionally biased toward basic and acidic residues: residues 563–596 (VEQM…LAEK), 604–617 (KKME…KQEE), and 630–713 (EERR…KALR). The interval 794 to 868 (LNSDDSTDDE…RTSSAVWNSP (75 aa)) is IN box. S796 and S799 each carry phosphoserine. Position 800 is a phosphothreonine (T800). T860 carries the post-translational modification Phosphothreonine; by AURKB. 3 positions are modified to phosphoserine: S861, S862, and S867.

The protein belongs to the INCENP family. Component of the chromosomal passenger complex (CPC) composed of at least BIRC5/survivin, CDCA8/borealin, INCENP, AURKB or AURKC; in the complex binds directly to AURKB or AURKC via the IN box, and forms a triple-helix bundle-based subcomplex with BIRC5 and CDCA8 via its N-terminus. The reported homodimerization is questioned as the SAH domain is shown to be monomeric. Interacts with H2AZ1. Interacts with CBX1 and CBX3. Interacts with tubulin beta chain. Interacts with EVI5. Interacts with CBX5; POGZ and INCENP compete for interaction with CBX5. Interacts with POGZ. Interacts with JTB. In terms of processing, phosphorylation by AURKB at its C-terminal part is important for AURKB activation by INCENP.

It localises to the chromosome. The protein resides in the centromere. Its subcellular location is the cytoplasm. It is found in the cytoskeleton. The protein localises to the spindle. It localises to the nucleus. The protein resides in the kinetochore. Its subcellular location is the midbody. In terms of biological role, component of the chromosomal passenger complex (CPC), a complex that acts as a key regulator of mitosis. The CPC complex has essential functions at the centromere in ensuring correct chromosome alignment and segregation and is required for chromatin-induced microtubule stabilization and spindle assembly. Acts as a scaffold regulating CPC localization and activity. The C-terminus associates with AURKB or AURKC, the N-terminus associated with BIRC5/survivin and CDCA8/borealin tethers the CPC to the inner centromere, and the microtubule binding activity within the central SAH domain directs AURKB/C toward substrates near microtubules. The flexibility of the SAH domain is proposed to allow AURKB/C to follow substrates on dynamic microtubules while ensuring CPC docking to static chromatin. Activates AURKB and AURKC. Controls the kinetochore localization of BUB1. This Mus musculus (Mouse) protein is Inner centromere protein (Incenp).